The chain runs to 3019 residues: Genome polyprotein (3019 aa).

Position 2 is an N-acetylserine; by host (Ser2). The interaction with STAT1 stretch occupies residues 2–23 (STLPKPQRITKRNINRRPQDVK). Residues 2–58 (STLPKPQRITKRNINRRPQDVKFPGGGQIVGGVYVLPRRGPKLGVRAVRKTSERSQP) are interaction with EIF2AK2/PKR. The segment at 2–59 (STLPKPQRITKRNINRRPQDVKFPGGGQIVGGVYVLPRRGPKLGVRAVRKTSERSQPR) is interaction with DDX3X. Residues 2–75 (STLPKPQRIT…PRARRTEGRS (74 aa)) form a disordered region. At 2–168 (STLPKPQRIT…EDGINFATGN (167 aa)) the chain is on the cytoplasmic side. Short sequence motifs (nuclear localization signal) lie at residues 5–13 (PKPQRITKR) and 38–43 (PRRGPK). Position 53 is a phosphoserine; by host (Ser53). Short sequence motifs (nuclear localization signal) lie at residues 58-64 (PRSRRQP) and 66-71 (PRARRT). Basic residues predominate over residues 58–68 (PRSRRQPIPRA). Phosphoserine; by host is present on residues Ser99 and Ser116. The important for endoplasmic reticulum and mitochondrial localization stretch occupies residues 112–152 (PRRRSRNLGKVIDTLTCGFADLMGYIPLVGAPVGGVARALA). An interaction with APOA2 region spans residues 122–173 (VIDTLTCGFADLMGYIPLVGAPVGGVARALAHGVRALEDGINFATGNLPGCS). The segment at 164–167 (FATG) is important for lipid droplets localization. Residues 169–189 (LPGCSFSIFLLALLSCLLTPT) traverse the membrane as a helical segment. A propeptide spans 178–191 (LLALLSCLLTPTAG) (ER anchor for the core protein, removed in mature form by host signal peptidase). The Lumenal portion of the chain corresponds to 190-358 (AGLEYRNASG…IGAHWGVMAG (169 aa)). N-linked (GlcNAc...) asparagine; by host glycans are attached at residues Asn196, Asn209, and Asn234. Residues 265–296 (MVGAATLCSALYVGDLCGALFLVGQGFSWRHR) are important for fusion. Asn305 carries an N-linked (GlcNAc...) asparagine; by host glycan. A helical membrane pass occupies residues 359-379 (VAYYSMQGNWAKVFLVLCLFS). Residues 380–730 (GVDASTTITG…WEFVILIFLL (351 aa)) are Lumenal-facing. The HVR1 stretch occupies residues 385 to 412 (TTITGGVAASGAFTITSLFSTGAKQPLH). N-linked (GlcNAc...) (high mannose) asparagine; by host glycosylation is found at Asn417, Asn423, and Asn430. Disulfide bonds link Cys429–Cys553, Cys452–Cys459, Cys487–Cys495, and Cys504–Cys509. The N-linked (GlcNAc...) asparagine; by host glycan is linked to Asn448. Residues 475 to 479 (ANISG) form an HVR2 region. An N-linked (GlcNAc...) asparagine; by host glycan is attached at Asn476. Residues 481 to 494 (SSEKPYCWHYAPRP) form a CD81-binding 1 region. Asn533 is a glycosylation site (N-linked (GlcNAc...) asparagine; by host). A CD81-binding 2 region spans residues 545–552 (PPTEPWFG). An N-linked (GlcNAc...) asparagine; by host glycan is attached at Asn557. 4 disulfides stabilise this stretch: Cys565-Cys570, Cys586-Cys590, Cys602-Cys625, and Cys612-Cys649. N-linked (GlcNAc...) (high mannose) asparagine; by host glycosylation is found at Asn628 and Asn650. A disulfide bridge connects residues Cys657 and Cys682. A PKR/eIF2-alpha phosphorylation homology domain (PePHD) region spans residues 665–676 (SEMYPLLHSTTE). The chain crosses the membrane as a helical span at residues 731–751 (LADARVCVVLWMMMLISQAEA). Residues 752–762 (ALENLIVLNAI) lie on the Lumenal side of the membrane. A helical transmembrane segment spans residues 763 to 783 (SAAGTHGIWWSLVAFCVAWHV). The Cytoplasmic segment spans residues 784-786 (RGR). Residues 787-808 (IFPIAVYSIVGLWPLLLLVLML) traverse the membrane as a helical segment. Residues 809-818 (PYRAYAWTGT) lie on the Lumenal side of the membrane. Residues 819 to 839 (DTSTLGAGVLSLFALFTLSPW) form a helical membrane-spanning segment. Over 840-843 (YKHW) the chain is Cytoplasmic. The helical transmembrane segment at 844 to 863 (IARLIWWNQYTIARCEAALQ) threads the bilayer. At 864–886 (IWVPPLLARGARDGIILLAGLFY) the chain is on the lumenal side. The chain crosses the membrane as a helical span at residues 887–907 (PALVFDITKLLLAILGPLYIL). The Peptidase C18 domain occupies 908-1031 (QASLVRVPYF…DYRSMGWRLL (124 aa)). Residues 908–1662 (QASLVRVPYF…CMAADLEVAT (755 aa)) lie on the Cytoplasmic side of the membrane. The protease NS2-3 stretch occupies residues 909-1211 (ASLVRVPYFV…PVESLSAQTR (303 aa)). A lipid anchor (S-palmitoyl cysteine; by host) is attached at Cys927. An interaction with host SCPS1 region spans residues 934 to 954 (TGGKYVQMVLLALARGFNTYL). Residues His957, Glu977, and Cys998 each act as for protease NS2 activity; shared with dimeric partner in the active site. Residues 1032-1213 (APITAHAQQT…ESLSAQTRSP (182 aa)) enclose the Peptidase S29 domain. Active-site charge relay system; for serine protease NS3 activity residues include His1088 and Asp1112. Zn(2+) is bound by residues Cys1128 and Cys1130. Ser1170 functions as the Charge relay system; for serine protease NS3 activity in the catalytic mechanism. Positions 1176 and 1180 each coordinate Zn(2+). 1235-1242 (APTGSGES) provides a ligand contact to ATP. Mg(2+) contacts are provided by Ser1242 and Glu1322. Residues 1321–1324 (DECH) carry the DECH box motif. Residues 1366–1543 (NIEEVALTGE…ELTPSETTVR (178 aa)) form the Helicase C-terminal domain. The interval 1482–1505 (VPQDAVSRSQRRGRTGRGKSGTYR) is disordered. An RNA-binding region spans residues 1491–1503 (QRRGRTGRGKSGT). The helical transmembrane segment at 1663-1683 (SAWVLLGGVMAALTAYCLSVG) threads the bilayer. Residues 1684-1695 (SVVIVGHLVLGG) form an NS3-binding region. At 1684-1810 (SVVIVGHLVL…SVTSPLTTNQ (127 aa)) the chain is on the cytoplasmic side. The chain crosses the membrane as a helical span at residues 1811-1829 (TLLFNIMGGWVASNLAPPP). The Lumenal portion of the chain corresponds to 1830-1833 (ASTA). The chain crosses the membrane as a helical span at residues 1834–1854 (FVVSGLAGAAVGSIGLGKVLL). Position 1855 (Asp1855) is a topological domain, cytoplasmic. A helical transmembrane segment spans residues 1856–1876 (ILAGYGAGVAGALVAFKIMGG). Residues 1877–1886 (EMPSTEDMVN) lie on the Lumenal side of the membrane. Residues 1887-1907 (LLPAILSPGALVVGVICAAIL) traverse the membrane as a helical segment. Residues 1908-1977 (RRHVGPGEGA…WINEDYPTPC (70 aa)) lie on the Cytoplasmic side of the membrane. The S-palmitoyl cysteine; by host moiety is linked to residue Cys1977. An intramembrane segment occupies 1978–2007 (DGNWLYDIWNWVCTVLADFKLWLGAKILPK). The Cytoplasmic portion of the chain corresponds to 2008-2998 (MPGIPFLSCQ…YHSVSRARSR (991 aa)). Cys2016, Cys2034, Cys2036, and Cys2057 together coordinate Zn(2+). Residues 2125 to 2213 (EFFTELDGVR…ASSSASQLSA (89 aa)) form an FKBP8-binding region. Residues 2125 to 2337 (EFFTELDGVR…PVPPPRRKRT (213 aa)) are transcriptional activation. The interval 2140–2144 (PVCRP) is interaction with non-structural protein 4A. The segment at 2191-2225 (AKRRLDRGSPPSLASSSASQLSAPSRKATCTTHGR) is disordered. The interval 2194 to 2446 (RLDRGSPPSL…ALITPCAAEE (253 aa)) is interaction with host SKP2. 6 positions are modified to phosphoserine; by host: Ser2199, Ser2202, Ser2206, Ser2209, Ser2212, and Ser2215. Low complexity predominate over residues 2199 to 2215 (SPPSLASSSASQLSAPS). Residues 2215–2254 (SRKATCTTHGRHPDAELITANLLWRQEMGSNITRVESESK) form an ISDR region. The segment at 2215 to 2280 (SRKATCTTHG…DELSVAAECF (66 aa)) is interaction with EIF2AK2/PKR. The NS4B-binding stretch occupies residues 2254–2311 (KVVILDSFEPLRACDDEDELSVAAECFKKPPKYPPALPIWARPDYNPPLVEPWKDPDY). Residues 2304–2382 (EPWKDPDYVP…GTQSGSLTGP (79 aa)) form a V3 region. An SH3-binding motif is present at residues 2327-2330 (PPVP). The Nuclear localization signal motif lies at 2332 to 2340 (PRRKRTIVL). Residue Lys2355 forms a Glycyl lysine isopeptide (Lys-Gly) (interchain with G-Cter in ubiquitin) linkage. A disordered region spans residues 2356–2417 (SFPQPTCSAE…PDLSSGSWST (62 aa)). The span at 2369–2381 (TSGVGTQSGSLTG) shows a compositional bias: polar residues. 2 positions are modified to phosphoserine; by host: Ser2457 and Ser2470. In terms of domain architecture, RdRp catalytic spans 2642-2760 (PLGFSYDTRC…IAESAGIDED (119 aa)). Mg(2+) is bound by residues Asp2648, Asp2746, and Asp2747. A helical membrane pass occupies residues 2999–3019 (HLLLGLLLLTVGVGIFLLPAR).

It belongs to the hepacivirus polyprotein family. As to quaternary structure, homooligomer. Interacts with E1 (via C-terminus). Interacts with the non-structural protein 5A. Interacts (via N-terminus) with host STAT1 (via SH2 domain); this interaction results in decreased STAT1 phosphorylation and ubiquitin-mediated proteasome-dependent STAT1 degradation, leading to decreased IFN-stimulated gene transcription. Interacts with host STAT3; this interaction constitutively activates STAT3. Interacts with host LTBR receptor. Interacts with host TNFRSF1A receptor and possibly induces apoptosis. Interacts with host HNRPK. Interacts with host YWHAE. Interacts with host UBE3A/E6AP. Interacts with host DDX3X. Interacts with host APOA2. Interacts with host RXRA protein. Interacts with host SP110 isoform 3/Sp110b; this interaction sequesters the transcriptional corepressor SP110 away from the nucleus. Interacts with host CREB3 nuclear transcription protein; this interaction triggers cell transformation. Interacts with host ACY3. Interacts with host C1QR1. Interacts with host RBM24; this interaction, which enhances the interaction of the mature core protein with 5'-UTR, may inhibit viral translation and favor replication. Interacts with host EIF2AK2/PKR; this interaction induces the autophosphorylation of EIF2AK2. Part of the viral assembly initiation complex composed of NS2, E1, E2, NS3, NS4A, NS5A and the mature core protein. Forms a heterodimer with envelope glycoprotein E2. Interacts with mature core protein. Interacts with protease NS2. The heterodimer E1/E2 interacts with host CLDN1; this interaction plays a role in viral entry into host cell. Interacts with host SPSB2 (via C-terminus). Part of the viral assembly initiation complex composed of NS2, E1, E2, NS3, NS4A, NS5A and the mature core protein. Interacts with host NEURL3; this interaction prevents E1 binding to glycoprotein E2. In terms of assembly, forms a heterodimer with envelope glycoprotein E1. Interacts with host CD81 and SCARB1 receptors; these interactions play a role in viral entry into host cell. Interacts with host EIF2AK2/PKR; this interaction inhibits EIF2AK2 and probably allows the virus to evade the innate immune response. Interacts with host CD209/DC-SIGN and CLEC4M/DC-SIGNR. Interact with host SPCS1; this interaction is essential for viral particle assembly. Interacts with protease NS2. The heterodimer E1/E2 interacts with host CLDN1; this interaction plays a role in viral entry into host cell. Part of the viral assembly initiation complex composed of NS2, E1, E2, NS3, NS4A, NS5A and the mature core protein. Interacts with host SLC3A2/4F2hc; the interaction may facilitate viral entry into host cell. Interacts with human PLSCR1. As to quaternary structure, homohexamer. Homoheptamer. Interacts with protease NS2. Homodimer. Interacts with host SPCS1; this interaction is essential for viral particle assembly. Interacts with envelope glycoprotein E1. Interacts with envelope glycoprotein E2. Interacts with viroporin p7. Interacts with serine protease/helicase NS3. Part of the replication complex composed of NS2, NS3, NS4A, NS4B, NS5A and the RNA-directed RNA polymerase embedded in an ER-derived membranous web. Part of the viral assembly initiation complex composed of NS2, E1, E2, NS3, NS4A, NS5A and the mature core protein. In terms of assembly, interacts with protease NS2. Interacts with non-structural protein 4A; this interaction stabilizes the folding of NS3 serine protease. NS3-NS4A interaction is essential for NS3 activation and allows membrane anchorage of the latter. NS3/NS4A complex also prevents phosphorylation of host IRF3, thus preventing the establishment of dsRNA induced antiviral state. Interacts with host MAVS; this interaction leads to the cleavage and inhibition of host MAVS. Interacts with host TICAM1; this interaction leads to the cleavage and inhibition of host TICAM1. Interacts with host TANK-binding kinase/TBK1; this interaction results in the inhibition of the association between TBK1 and IRF3, which leads to the inhibition of IRF3 activation. Interacts with host RBM24. Part of the replication complex composed of NS2, NS3, NS4A, NS4B, NS5A and the RNA-directed RNA polymerase embedded in an ER-derived membranous web. Part of the viral assembly initiation complex composed of NS2, E1, E2, NS3, NS4A, NS5A and the mature core protein. As to quaternary structure, interacts with NS3 serine protease; this interaction stabilizes the folding of NS3 serine protease. NS3-NS4A interaction is essential for NS3 activation and allows membrane anchorage of the latter. Interacts with non-structural protein 5A (via N-terminus). Part of the replication complex composed of NS2, NS3, NS4A, NS4B, NS5A and the RNA-directed RNA polymerase embedded in an ER-derived membranous web. Part of the viral assembly initiation complex composed of NS2, E1, E2, NS3, NS4A, NS5A and the mature core protein. Homomultimer. Interacts with non-structural protein NS5A. Interacts with host PLA2G4C; this interaction likely initiates the recruitment of replication complexes to lipid droplets. Interacts with host STING; this interaction disrupts the interaction between STING and TBK1 thereby suppressing the interferon signaling. Part of the replication complex composed of NS2, NS3, NS4A, NS4B, NS5A and the RNA-directed RNA polymerase embedded in an ER-derived membranous web. In terms of assembly, monomer. Homodimer; dimerization is required for RNA-binding. Interacts with the mature core protein. Interacts (via N-terminus) with non-structural protein 4A. Interacts with non-structural protein 4B. Interacts (via region D2) with RNA-directed RNA polymerase. Part of the viral assembly initiation complex composed of NS2, E1, E2, NS3, NS4A, NS5A and the mature core protein. Part of the replication complex composed of NS2, NS3, NS4A, NS4B, NS5A and the RNA-directed RNA polymerase embedded in an ER-derived membranous web. Interacts with host GRB2. Interacts with host BIN1. Interacts with host PIK3R1. Interacts with host SRCAP. Interacts with host FKBP8. Interacts (via C-terminus) with host VAPB (via MSP domain). Interacts with host EIF2AK2/PKR; this interaction leads to disruption of EIF2AK2 dimerization by NS5A and probably allows the virus to evade the innate immune response. Interacts (via N-terminus) with host PACSIN2 (via N-terminus); this interaction attenuates protein kinase C alpha-mediated phosphorylation of PACSIN2 by disrupting the interaction between PACSIN2 and PRKCA. Interacts (via N-terminus) with host SRC kinase (via SH2 domain). Interacts with most Src-family kinases. Interacts with host IFI27 and SKP2; promotes the ubiquitin-mediated proteasomal degradation of NS5A. Interacts with host GPS2. Interacts with host TNFRSF21; this interaction allows the modulation by the virus of JNK, p38 MAPK, STAT3, and Akt signaling pathways in a DR6-dependent manner. Interacts (via N-terminus) with host CIDEB (via N-terminus); this interaction seems to regulate the association of HCV particles with APOE. Interacts with host CHKA/Choline Kinase-alpha; CHKA bridges host PI4KA and NS5A and potentiates NS5A-stimulated PI4KA activity, which then facilitates the targeting of the ternary complex to the ER for viral replication. Interacts with host SPSB2 (via C-terminus); this interaction targets NS5A for ubiquitination and degradation. Interacts with host RAB18; this interaction may promote the association of NS5A and other replicase components with lipid droplets. Interacts (via region D2) with host PPIA/CYPA; the interaction stimulates RNA-binding ability of NS5A and is dependent on the peptidyl-prolyl cis-trans isomerase activity of PPIA/CYPA. Interacts with host TRIM14; this interaction induces the degradation of NS5A. As to quaternary structure, homooligomer. Interacts with non-structural protein 5A. Interacts with host VAPB. Interacts with host PRK2/PKN2. Interacts with host HNRNPA1 and SEPT6; these interactions facilitate viral replication. Part of the replication complex composed of NS2, NS3, NS4A, NS4B, NS5A and the RNA-directed RNA polymerase. Requires Zn(2+) as cofactor. It depends on Mg(2+) as a cofactor. Specific enzymatic cleavages in vivo yield mature proteins. The structural proteins, core, E1, E2 and p7 are produced by proteolytic processing by host signal peptidases. The core protein precursor is synthesized as a 23 kDa, which is retained in the ER membrane through the hydrophobic signal peptide. Cleavage by the signal peptidase releases the 21 kDa mature core protein. The cleavage of the core protein precursor occurs between aminoacids 176 and 188 but the exact cleavage site is not known. Some degraded forms of the core protein appear as well during the course of infection. The other proteins (p7, NS2, NS3, NS4A, NS4B, NS5A and NS5B) are cleaved by the viral proteases. Autoprocessing between NS2 and NS3 is mediated by the NS2 cysteine protease catalytic domain and regulated by the NS3 N-terminal domain. In terms of processing, phosphorylated by host PKC and PKA. Post-translationally, ubiquitinated; mediated by UBE3A and leading to core protein subsequent proteasomal degradation. Highly N-glycosylated. In terms of processing, palmitoylation is required for NS2/3 autoprocessing and E2 recruitment to membranes. Post-translationally, palmitoylated. This modification may play a role in its polymerization or in protein-protein interactions. Phosphorylated on serines in a basal form termed p56. p58 is a hyperphosphorylated form of p56. p56 and p58 coexist in the cell in roughly equivalent amounts. Hyperphosphorylation is dependent on the presence of NS4A. Host CSNK1A1/CKI-alpha or RPS6KB1 kinases may be responsible for NS5A phosphorylation. In terms of processing, tyrosine phosphorylation is essential for the interaction with host SRC. Post-translationally, ubiquitinated. Ubiquitination, most probably at Lys-2355, mediated by host IFI27 and SKP2 leads to proteasomal degradation, restricting viral infection. Ubiquitination by host TRIM22 leads to interruption of viral replication. The N-terminus is phosphorylated by host PRK2/PKN2.

It localises to the host endoplasmic reticulum membrane. It is found in the host mitochondrion membrane. The protein resides in the virion. The protein localises to the host cytoplasm. Its subcellular location is the host nucleus. It localises to the host lipid droplet. It is found in the virion membrane. The protein resides in the host mitochondrion. The protein localises to the host cell membrane. Its subcellular location is the host perinuclear region. The enzyme catalyses Hydrolysis of four peptide bonds in the viral precursor polyprotein, commonly with Asp or Glu in the P6 position, Cys or Thr in P1 and Ser or Ala in P1'.. It carries out the reaction a ribonucleoside 5'-triphosphate + H2O = a ribonucleoside 5'-diphosphate + phosphate + H(+). It catalyses the reaction ATP + H2O = ADP + phosphate + H(+). The catalysed reaction is RNA(n) + a ribonucleoside 5'-triphosphate = RNA(n+1) + diphosphate. Its activity is regulated as follows. Inhibited by the antiviral drug hexamethylene amiloride. Inhibition by amantadine appears to be genotype-dependent. Also inhibited by long-alkyl-chain iminosugar derivatives. Activity is up-regulated by PRK2/PKN2-mediated phosphorylation. Functionally, packages viral RNA to form a viral nucleocapsid, and promotes virion budding. Participates in the viral particle production as a result of its interaction with the non-structural protein 5A. Binds RNA and may function as a RNA chaperone to induce the RNA structural rearrangements taking place during virus replication. Modulates viral translation initiation by interacting with viral IRES and 40S ribosomal subunit. Affects various cell signaling pathways, host immunity and lipid metabolism. Prevents the establishment of cellular antiviral state by blocking the interferon-alpha/beta (IFN-alpha/beta) and IFN-gamma signaling pathways and by blocking the formation of phosphorylated STAT1 and promoting ubiquitin-mediated proteasome-dependent degradation of STAT1. Activates STAT3 leading to cellular transformation. Regulates the activity of cellular genes, including c-myc and c-fos. May repress the promoter of p53, and sequester CREB3 and SP110 isoform 3/Sp110b in the cytoplasm. Represses cell cycle negative regulating factor CDKN1A, thereby interrupting an important check point of normal cell cycle regulation. Targets transcription factors involved in the regulation of inflammatory responses and in the immune response: suppresses TNF-induced NF-kappa-B activation, and activates AP-1. Binds to dendritic cells (DCs) via C1QR1, resulting in down-regulation of T-lymphocytes proliferation. Alters lipid metabolism by interacting with hepatocellular proteins involved in lipid accumulation and storage. Induces up-regulation of FAS promoter activity, and thereby contributes to the increased triglyceride accumulation in hepatocytes (steatosis). In terms of biological role, forms a heterodimer with envelope glycoprotein E2, which mediates virus attachment to the host cell, virion internalization through clathrin-dependent endocytosis and fusion with host membrane. Fusion with the host cell is most likely mediated by both E1 and E2, through conformational rearrangements of the heterodimer required for fusion rather than a classical class II fusion mechanism. E1/E2 heterodimer binds host apolipoproteins such as APOB and ApoE thereby forming a lipo-viro-particle (LVP). APOE associated to the LVP allows the initial virus attachment to cell surface receptors such as the heparan sulfate proteoglycans (HSPGs), syndecan-1 (SDC1), syndecan-1 (SDC2), the low-density lipoprotein receptor (LDLR) and scavenger receptor class B type I (SCARB1). The cholesterol transfer activity of SCARB1 allows E2 exposure and binding of E2 to SCARB1 and the tetraspanin CD81. E1/E2 heterodimer binding on CD81 activates the epithelial growth factor receptor (EGFR) signaling pathway. Diffusion of the complex E1-E2-EGFR-SCARB1-CD81 to the cell lateral membrane allows further interaction with Claudin 1 (CLDN1) and occludin (OCLN) to finally trigger HCV entry. Forms a heterodimer with envelope glycoprotein E1, which mediates virus attachment to the host cell, virion internalization through clathrin-dependent endocytosis and fusion with host membrane. Fusion with the host cell is most likely mediated by both E1 and E2, through conformational rearrangements of the heterodimer required for fusion rather than a classical class II fusion mechanism. The interaction between envelope glycoprotein E2 and host apolipoprotein E/APOE allows the proper assembly, maturation and infectivity of the viral particles. This interaction is probably promoted via the up-regulation of cellular autophagy by the virus. E1/E2 heterodimer binds host apolipoproteins such as APOB and APOE thereby forming a lipo-viro-particle (LVP). APOE associated to the LVP allows the initial virus attachment to cell surface receptors such as the heparan sulfate proteoglycans (HSPGs), syndecan-1 (SDC1), syndecan-1 (SDC2), the low-density lipoprotein receptor (LDLR) and scavenger receptor class B type I (SCARB1). The cholesterol transfer activity of SCARB1 allows E2 exposure and binding of E2 to SCARB1 and the tetraspanin CD81. E1/E2 heterodimer binding on CD81 activates the epithelial growth factor receptor (EGFR) signaling pathway. Diffusion of the complex E1-E2-EGFR-SCARB1-CD81 to the cell lateral membrane allows further interaction with Claudin 1 (CLDN1) and occludin (OCLN) to finally trigger HCV entry. Inhibits host EIF2AK2/PKR activation, preventing the establishment of an antiviral state. Viral ligand for CD209/DC-SIGN and CLEC4M/DC-SIGNR, which are respectively found on dendritic cells (DCs), and on liver sinusoidal endothelial cells and macrophage-like cells of lymph node sinuses. These interactions allow the capture of circulating HCV particles by these cells and subsequent facilitated transmission to permissive cells such as hepatocytes and lymphocyte subpopulations. The interaction between E2 and host amino acid transporter complex formed by SLC3A2 and SLC7A5/LAT1 may facilitate viral entry into host cell. Its function is as follows. Ion channel protein that acts as a viroporin and plays an essential role in the assembly, envelopment and secretion of viral particles. Regulates the host cell secretory pathway, which induces the intracellular retention of viral glycoproteins and favors assembly of viral particles. Creates a pore in acidic organelles and releases Ca(2+) and H(+) in the cytoplasm of infected cells, leading to a productive viral infection. High levels of cytoplasmic Ca(2+) may trigger membrane trafficking and transport of viral ER-associated proteins to viroplasms, sites of viral genome replication. This ionic imbalance induces the assembly of the inflammasome complex, which triggers the maturation of pro-IL-1beta into IL-1beta through the action of caspase-1. Targets also host mitochondria and induces mitochondrial depolarization. In addition of its role as a viroporin, acts as a lipid raft adhesion factor. Functionally, cysteine protease required for the proteolytic auto-cleavage between the non-structural proteins NS2 and NS3. The N-terminus of NS3 is required for the function of NS2 protease (active region NS2-3). Promotes the initiation of viral particle assembly by mediating the interaction between structural and non-structural proteins. In terms of biological role, displays three enzymatic activities: serine protease with a chymotrypsin-like fold, NTPase and RNA helicase. NS3 serine protease, in association with NS4A, is responsible for the cleavages of NS3-NS4A, NS4A-NS4B, NS4B-NS5A and NS5A-NS5B. The NS3/NS4A complex prevents phosphorylation of host IRF3, thus preventing the establishment of dsRNA induced antiviral state. The NS3/NS4A complex induces host amino acid transporter component SLC3A2, thus contributing to HCV propagation. NS3 RNA helicase binds to RNA and unwinds both dsDNA and dsRNA in the 3' to 5' direction, and likely resolves RNA complicated stable secondary structures in the template strand. Binds a single ATP and catalyzes the unzipping of a single base pair of dsRNA. Inhibits host antiviral proteins TBK1 and IRF3 thereby preventing the establishment of an antiviral state. Cleaves host MAVS/CARDIF thereby preventing the establishment of an antiviral state. Cleaves host TICAM1/TRIF, thereby disrupting TLR3 signaling and preventing the establishment of an antiviral state. Induces a specific membrane alteration that serves as a scaffold for the virus replication complex. This membrane alteration gives rise to the so-called ER-derived membranous web that contains the replication complex. NS4B self-interaction contributes to its function in membranous web formation. Promotes host TRIF protein degradation in a CASP8-dependent manner thereby inhibiting host TLR3-mediated interferon signaling. Disrupts the interaction between STING and TBK1 contributing to the inhibition of interferon signaling. Its function is as follows. Phosphorylated protein that is indispensable for viral replication and assembly. Both hypo- and hyperphosphorylated states are required for the viral life cycle. The hyperphosphorylated form of NS5A is an inhibitor of viral replication. Involved in RNA-binding and especially in binding to the viral genome. Zinc is essential for RNA-binding. Participates in the viral particle production as a result of its interaction with the mature viral core protein. Its interaction with host VAPB may target the viral replication complex to vesicles. Down-regulates viral IRES translation initiation. Mediates interferon resistance, presumably by interacting with and inhibiting host EIF2AK2/PKR. Prevents BIN1-induced apoptosis. Acts as a transcriptional activator of some host genes important for viral replication when localized in the nucleus. Via the interaction with host PACSIN2, modulates lipid droplet formation in order to promote virion assembly. Modulates TNFRSF21/DR6 signaling pathway for viral propagation. Functionally, RNA-dependent RNA polymerase that performs primer-template recognition and RNA synthesis during viral replication. Initiates RNA transcription/replication at a flavin adenine dinucleotide (FAD), resulting in a 5'- FAD cap on viral RNAs. In this way, recognition of viral 5' RNA by host pattern recognition receptors can be bypassed, thereby evading activation of antiviral pathways. In Homo sapiens (Human), this protein is Genome polyprotein.